Here is a 228-residue protein sequence, read N- to C-terminus: Putative N-acetylmannosamine-6-phosphate 2-epimerase (228 aa).

Belongs to the NanE family.

It carries out the reaction an N-acyl-D-glucosamine 6-phosphate = an N-acyl-D-mannosamine 6-phosphate. It functions in the pathway amino-sugar metabolism; N-acetylneuraminate degradation; D-fructose 6-phosphate from N-acetylneuraminate: step 3/5. In terms of biological role, converts N-acetylmannosamine-6-phosphate (ManNAc-6-P) to N-acetylglucosamine-6-phosphate (GlcNAc-6-P). This is Putative N-acetylmannosamine-6-phosphate 2-epimerase from Lactiplantibacillus plantarum (strain ATCC BAA-793 / NCIMB 8826 / WCFS1) (Lactobacillus plantarum).